The following is a 367-amino-acid chain: tRNA-specific 2-thiouridylase MnmA (367 aa).

ATP is bound by residues 11–18 (GLSGGVDS) and M37. Positions 109 to 111 (NPD) are interaction with target base in tRNA. C114 functions as the Nucleophile in the catalytic mechanism. A disulfide bond links C114 and C211. G139 provides a ligand contact to ATP. An interaction with tRNA region spans residues 161–163 (KDQ). The Cysteine persulfide intermediate role is filled by C211.

Belongs to the MnmA/TRMU family.

The protein resides in the cytoplasm. It carries out the reaction S-sulfanyl-L-cysteinyl-[protein] + uridine(34) in tRNA + AH2 + ATP = 2-thiouridine(34) in tRNA + L-cysteinyl-[protein] + A + AMP + diphosphate + H(+). In terms of biological role, catalyzes the 2-thiolation of uridine at the wobble position (U34) of tRNA, leading to the formation of s(2)U34. This chain is tRNA-specific 2-thiouridylase MnmA, found in Mycoplasma genitalium (strain ATCC 33530 / DSM 19775 / NCTC 10195 / G37) (Mycoplasmoides genitalium).